Consider the following 217-residue polypeptide: Elongation factor Ts (217 aa).

Residues 81 to 84 (TDFV) are involved in Mg(2+) ion dislocation from EF-Tu.

The protein belongs to the EF-Ts family.

The protein resides in the cytoplasm. Associates with the EF-Tu.GDP complex and induces the exchange of GDP to GTP. It remains bound to the aminoacyl-tRNA.EF-Tu.GTP complex up to the GTP hydrolysis stage on the ribosome. This is Elongation factor Ts from Myxococcus xanthus (strain DK1622).